Reading from the N-terminus, the 597-residue chain is Aspartate--tRNA(Asp/Asn) ligase (597 aa).

Residue glutamate 170 participates in L-aspartate binding. The tract at residues 194-197 (QLFK) is aspartate. Arginine 216 lines the L-aspartate pocket. Residues 216-218 (RDE) and glutamine 225 contribute to the ATP site. Residue histidine 448 coordinates L-aspartate. Glutamate 482 contributes to the ATP binding site. Arginine 489 serves as a coordination point for L-aspartate. 534–537 (GWDR) contacts ATP. Residues 558 to 597 (GGGVDPLTDAPAPITAAQRKESGIDAKPEKAEKAGKPADA) form a disordered region. A compositionally biased stretch (basic and acidic residues) spans 575-597 (QRKESGIDAKPEKAEKAGKPADA).

Belongs to the class-II aminoacyl-tRNA synthetase family. Type 1 subfamily. Homodimer.

It localises to the cytoplasm. It catalyses the reaction tRNA(Asx) + L-aspartate + ATP = L-aspartyl-tRNA(Asx) + AMP + diphosphate. Its function is as follows. Aspartyl-tRNA synthetase with relaxed tRNA specificity since it is able to aspartylate not only its cognate tRNA(Asp) but also tRNA(Asn). Reaction proceeds in two steps: L-aspartate is first activated by ATP to form Asp-AMP and then transferred to the acceptor end of tRNA(Asp/Asn). This chain is Aspartate--tRNA(Asp/Asn) ligase, found in Mycobacteroides abscessus (strain ATCC 19977 / DSM 44196 / CCUG 20993 / CIP 104536 / JCM 13569 / NCTC 13031 / TMC 1543 / L948) (Mycobacterium abscessus).